The primary structure comprises 877 residues: Probable alpha/beta-glucosidase agdC (877 aa).

An N-terminal signal peptide occupies residues 1–14; sequence MLGSLLLLAPLAGA. N-linked (GlcNAc...) asparagine glycosylation is found at asparagine 171, asparagine 293, and asparagine 373. Catalysis depends on aspartate 422, which acts as the Nucleophile. The active site involves glutamate 425. The interval 432–476 is disordered; it reads DPCTDPERYSSENNLPPAPPPVRSSSPRPLPGFPADFQPSSASRS. Pro residues predominate over residues 447–463; sequence PPAPPPVRSSSPRPLPG. N-linked (GlcNAc...) asparagine glycosylation occurs at asparagine 508. Aspartate 573 acts as the Proton donor in catalysis. Asparagine 574, asparagine 610, and asparagine 744 each carry an N-linked (GlcNAc...) asparagine glycan.

Belongs to the glycosyl hydrolase 31 family.

It localises to the secreted. The enzyme catalyses Hydrolysis of terminal, non-reducing (1-&gt;4)-linked alpha-D-glucose residues with release of alpha-D-glucose.. It catalyses the reaction Hydrolysis of terminal, non-reducing beta-D-glucosyl residues with release of beta-D-glucose.. In terms of biological role, glucosidase involved in the degradation of cellulosic biomass. Has both alpha- and beta-glucosidase activity. This is Probable alpha/beta-glucosidase agdC (agdC) from Aspergillus flavus (strain ATCC 200026 / FGSC A1120 / IAM 13836 / NRRL 3357 / JCM 12722 / SRRC 167).